Reading from the N-terminus, the 55-residue chain is Large ribosomal subunit protein bL33 (55 aa).

The protein belongs to the bacterial ribosomal protein bL33 family.

This chain is Large ribosomal subunit protein bL33, found in Sinorhizobium medicae (strain WSM419) (Ensifer medicae).